A 631-amino-acid chain; its full sequence is Glutamyl-tRNA(Gln) amidotransferase subunit E (631 aa).

Belongs to the GatB/GatE family. GatE subfamily. Heterodimer of GatD and GatE.

The enzyme catalyses L-glutamyl-tRNA(Gln) + L-glutamine + ATP + H2O = L-glutaminyl-tRNA(Gln) + L-glutamate + ADP + phosphate + H(+). Its function is as follows. Allows the formation of correctly charged Gln-tRNA(Gln) through the transamidation of misacylated Glu-tRNA(Gln) in organisms which lack glutaminyl-tRNA synthetase. The reaction takes place in the presence of glutamine and ATP through an activated gamma-phospho-Glu-tRNA(Gln). The GatDE system is specific for glutamate and does not act on aspartate. The sequence is that of Glutamyl-tRNA(Gln) amidotransferase subunit E from Methanococcus maripaludis (strain C5 / ATCC BAA-1333).